Consider the following 204-residue polypeptide: Transmembrane protein 253 (204 aa).

Transmembrane regions (helical) follow at residues 33-53 (LVLA…TISV), 62-82 (LVTA…IITL), 96-116 (MMIS…IEVM), and 138-158 (LSAE…LFLL). The disordered stretch occupies residues 184–204 (EEVSGLENGPVVASTGNRTDE).

The protein resides in the membrane. This chain is Transmembrane protein 253 (Tmem253), found in Mus musculus (Mouse).